The following is a 965-amino-acid chain: UvrABC system protein A (965 aa).

32-39 serves as a coordination point for ATP; the sequence is GLSGSGKS. Residues 254 to 281 form a C4-type zinc finger; that stretch reads CPVCDYSLPELEPRLFSFNAPMGACPAC. ABC transporter domains follow at residues 311-588 and 608-937; these read WDRR…PRSL and PNAT…HFLA. ATP is bound at residue 641–648; the sequence is GVSGSGKS. The segment at 740-766 adopts a C4-type zinc-finger fold; sequence CEACEGDGLIKVEMHFLPDVYVPCDVC.

Belongs to the ABC transporter superfamily. UvrA family. As to quaternary structure, forms a heterotetramer with UvrB during the search for lesions.

Its subcellular location is the cytoplasm. Its function is as follows. The UvrABC repair system catalyzes the recognition and processing of DNA lesions. UvrA is an ATPase and a DNA-binding protein. A damage recognition complex composed of 2 UvrA and 2 UvrB subunits scans DNA for abnormalities. When the presence of a lesion has been verified by UvrB, the UvrA molecules dissociate. The sequence is that of UvrABC system protein A from Xylella fastidiosa (strain 9a5c).